A 226-amino-acid polypeptide reads, in one-letter code: Glyceraldehyde 3-phosphate phosphatase (226 aa).

It belongs to the HAD-like hydrolase superfamily. It depends on Mg(2+) as a cofactor.

In terms of biological role, catalyzes the dephosphorylation of D,L-glyceraldehyde 3-phosphate in vitro. The chain is Glyceraldehyde 3-phosphate phosphatase from Methanothermobacter thermautotrophicus (strain ATCC 29096 / DSM 1053 / JCM 10044 / NBRC 100330 / Delta H) (Methanobacterium thermoautotrophicum).